The sequence spans 119 residues: UPF0102 protein FP2501 (119 aa).

Belongs to the UPF0102 family.

The sequence is that of UPF0102 protein FP2501 from Flavobacterium psychrophilum (strain ATCC 49511 / DSM 21280 / CIP 103535 / JIP02/86).